Reading from the N-terminus, the 305-residue chain is UDP-N-acetylenolpyruvoylglucosamine reductase 2 (305 aa).

In terms of domain architecture, FAD-binding PCMH-type spans 33 to 197 (VGGKADVFVA…LEARFELEEG (165 aa)). The active site involves R176. The Proton donor role is filled by S226. E296 is a catalytic residue.

This sequence belongs to the MurB family. The cofactor is FAD.

The protein resides in the cytoplasm. The enzyme catalyses UDP-N-acetyl-alpha-D-muramate + NADP(+) = UDP-N-acetyl-3-O-(1-carboxyvinyl)-alpha-D-glucosamine + NADPH + H(+). It participates in cell wall biogenesis; peptidoglycan biosynthesis. Its function is as follows. Cell wall formation. The polypeptide is UDP-N-acetylenolpyruvoylglucosamine reductase 2 (murB2) (Bacillus anthracis).